A 37-amino-acid polypeptide reads, in one-letter code: Photosystem I reaction center subunit VIII (37 aa).

A helical transmembrane segment spans residues 7–27 (LPSFFVPLVGLVFPAIAMASL).

This sequence belongs to the PsaI family.

The protein resides in the plastid. The protein localises to the chloroplast thylakoid membrane. Functionally, may help in the organization of the PsaL subunit. The sequence is that of Photosystem I reaction center subunit VIII from Eucalyptus globulus subsp. globulus (Tasmanian blue gum).